Reading from the N-terminus, the 419-residue chain is L-rhamnose isomerase (419 aa).

The Mn(2+) site is built by H262, D294, and D296.

This sequence belongs to the rhamnose isomerase family. Homotetramer. Requires Mn(2+) as cofactor.

It localises to the cytoplasm. The enzyme catalyses L-rhamnopyranose = L-rhamnulose. It functions in the pathway carbohydrate degradation; L-rhamnose degradation; glycerone phosphate from L-rhamnose: step 1/3. Catalyzes the interconversion of L-rhamnose and L-rhamnulose. The polypeptide is L-rhamnose isomerase (Escherichia coli O6:H1 (strain CFT073 / ATCC 700928 / UPEC)).